Reading from the N-terminus, the 288-residue chain is Cell division protein ZipA (288 aa).

Position 1 (methionine 1) is a topological domain, periplasmic. The chain crosses the membrane as a helical span at residues 2-22 (EIGLREWLIVIGIIVIAGILF). At 23 to 288 (DGWRRMRGGK…ERRALTQRRG (266 aa)) the chain is on the cytoplasmic side. Positions 48–138 (DEEETTSAEV…DDKPAQRITE (91 aa)) are disordered. Basic and acidic residues-rich tracts occupy residues 64–77 (LDTH…EHDL), 85–105 (RDNK…KDEP), and 122–138 (ARDD…RITE).

The protein belongs to the ZipA family. Interacts with FtsZ via their C-terminal domains.

It is found in the cell inner membrane. Essential cell division protein that stabilizes the FtsZ protofilaments by cross-linking them and that serves as a cytoplasmic membrane anchor for the Z ring. Also required for the recruitment to the septal ring of downstream cell division proteins. The protein is Cell division protein ZipA of Pseudomonas syringae pv. tomato (strain ATCC BAA-871 / DC3000).